Here is a 195-residue protein sequence, read N- to C-terminus: UPF0316 protein Pcar_2434 (195 aa).

The next 3 membrane-spanning stretches (helical) occupy residues Leu13–Leu33, Trp45–Met65, and Val71–Ile91.

This sequence belongs to the UPF0316 family.

The protein resides in the cell membrane. This chain is UPF0316 protein Pcar_2434, found in Syntrophotalea carbinolica (strain DSM 2380 / NBRC 103641 / GraBd1) (Pelobacter carbinolicus).